Reading from the N-terminus, the 141-residue chain is Hemoglobin subunit alpha-A (141 aa).

A Globin domain is found at valine 1–arginine 141. Residue histidine 58 participates in O2 binding. Position 87 (histidine 87) interacts with heme b.

This sequence belongs to the globin family. As to quaternary structure, heterotetramer of two alpha chains and two beta chains. In terms of tissue distribution, red blood cells.

Involved in oxygen transport from the lung to the various peripheral tissues. The sequence is that of Hemoglobin subunit alpha-A (HBAA) from Vultur gryphus (Andean condor).